The primary structure comprises 188 residues: Ribosome-recycling factor (188 aa).

Belongs to the RRF family.

The protein localises to the cytoplasm. In terms of biological role, responsible for the release of ribosomes from messenger RNA at the termination of protein biosynthesis. May increase the efficiency of translation by recycling ribosomes from one round of translation to another. The protein is Ribosome-recycling factor of Gluconacetobacter diazotrophicus (strain ATCC 49037 / DSM 5601 / CCUG 37298 / CIP 103539 / LMG 7603 / PAl5).